A 614-amino-acid chain; its full sequence is Glucosidase 2 subunit beta (614 aa).

An N-terminal signal peptide occupies residues 1–20 (MGLHTLLLLLLLRISASAAA). Asn115 is a glycosylation site (N-linked (GlcNAc...) asparagine). Composition is skewed to basic and acidic residues over residues 194–222 (EEER…KKAS), 231–272 (QENH…HDPE), and 324–351 (TGEK…HSEE). Positions 194-396 (EEERLRKEKE…SHESDDEYVD (203 aa)) are disordered. The segment covering 352–364 (THEDESDVPESAE) has biased composition (acidic residues). The segment covering 372-382 (SEVEDDRHKYD) has biased composition (basic and acidic residues). A compositionally biased stretch (acidic residues) spans 383–396 (DEDFSHESDDEYVD). Positions 497-592 (DQCFESKEGK…VLSTPALCDE (96 aa)) constitute an MRH domain. 3 disulfide bridges follow: Cys499–Cys512, Cys549–Cys578, and Cys563–Cys590.

As to quaternary structure, heterodimer of a catalytic alpha subunit and a beta subunit.

The protein localises to the endoplasmic reticulum. The protein operates within glycan metabolism; N-glycan metabolism. Regulatory subunit of glucosidase II. May be required for defense response elicited by pathogen-associated molecular patterns (PAMPs). In Oryza sativa subsp. indica (Rice), this protein is Glucosidase 2 subunit beta.